Here is a 141-residue protein sequence, read N- to C-terminus: Light-regulated protein 1, chloroplastic (141 aa).

The transit peptide at 1-41 (MQGALFIKPTILLPLPSSVSSPKLTFLLPHATKASRLSSLR) directs the protein to the chloroplast. Over residues 35 to 51 (SRLSSLRSNNSSSSSSL) the composition is skewed to low complexity. Residues 35 to 58 (SRLSSLRSNNSSSSSSLTSDPNTV) form a disordered region. The 2 X 15 AA approximate repeats stretch occupies residues 58–132 (VDYNSSILSV…ACDDLGGEFC (75 aa)). 2 consecutive repeat copies span residues 67–81 (VFPA…GYAC) and 118–132 (VFRE…GEFC).

As to quaternary structure, component of high molecular weight thylakoid LFNRs-containing protein complexes containing LIR1, LFNR1, LFNR2, TIC62 and TROL proteins. Interacts directly with LFNR1 and LFNR2; LIR1 increases the affinity of LFNR1 and LFNR2 for TIC62 and subsequent thylakoid relocalization. In terms of processing, may form interchain disulfide bonds with LFNR1 and LFNR2.

It localises to the plastid. The protein localises to the chloroplast thylakoid membrane. Its subcellular location is the chloroplast envelope. The protein resides in the chloroplast stroma. Its function is as follows. Thylakoid-determinant subunit of high molecular weight LFNRs-containing protein complexes. The polypeptide is Light-regulated protein 1, chloroplastic (Arabidopsis thaliana (Mouse-ear cress)).